The chain runs to 1044 residues: Isoleucine--tRNA ligase (1044 aa).

The 'HIGH' region motif lies at 49-59 (PYCSGRIHLGT). The short motif at 591-595 (KMSKS) is the 'KMSKS' region element. K594 is an ATP binding site.

The protein belongs to the class-I aminoacyl-tRNA synthetase family. IleS type 2 subfamily. Monomer. The cofactor is Zn(2+).

It localises to the cytoplasm. The enzyme catalyses tRNA(Ile) + L-isoleucine + ATP = L-isoleucyl-tRNA(Ile) + AMP + diphosphate. Catalyzes the attachment of isoleucine to tRNA(Ile). As IleRS can inadvertently accommodate and process structurally similar amino acids such as valine, to avoid such errors it has two additional distinct tRNA(Ile)-dependent editing activities. One activity is designated as 'pretransfer' editing and involves the hydrolysis of activated Val-AMP. The other activity is designated 'posttransfer' editing and involves deacylation of mischarged Val-tRNA(Ile). This chain is Isoleucine--tRNA ligase, found in Methanothermobacter thermautotrophicus (strain ATCC 29096 / DSM 1053 / JCM 10044 / NBRC 100330 / Delta H) (Methanobacterium thermoautotrophicum).